We begin with the raw amino-acid sequence, 193 residues long: Calcium-binding protein E63-1 (193 aa).

EF-hand domains follow at residues 35 to 70, 71 to 106, 127 to 162, and 163 to 193; these read VEIK…LGIN, VSDE…IQAL, DVTE…IGEP, and LNEQ…RLLL. Ca(2+)-binding residues include Asp-48, Asn-50, Asp-52, Arg-54, and Glu-59. Asp-140, Asp-142, Asn-144, Glu-151, Asp-176, Asp-178, Asp-180, Arg-182, and Glu-187 together coordinate Ca(2+).

The polypeptide is Calcium-binding protein E63-1 (Eip63F-1) (Drosophila melanogaster (Fruit fly)).